The chain runs to 175 residues: Dof zinc finger protein DOF1.5 (175 aa).

The segment at 29–57 is disordered; the sequence is EEQQQQQQPELQATTAVRSPSSDLTAEKR. Over residues 37–52 the composition is skewed to polar residues; sequence PELQATTAVRSPSSDL. The Dof-type zinc-finger motif lies at 62–116; that stretch reads IPCPRCKSMETKFCYFNNYNVNQPRHFCKGCQRYWTAGGALRNVPVGAGRRKSKP. Zn(2+) contacts are provided by C64, C67, C89, and C92. The short motif at 162–168 is the Nuclear localization signal element; the sequence is PVKRLRC.

Its subcellular location is the nucleus. In terms of biological role, transcription factor that binds specifically to a 5'-AA[AG]G-3' consensus core sequence. Acts as a negative regulator in the phytochrome-mediated light responses. Controls phyB-mediated end-of-day response and the phyA-mediated anthocyanin accumulation. Not involved in direct flowering time regulation. In Arabidopsis thaliana (Mouse-ear cress), this protein is Dof zinc finger protein DOF1.5 (DOF1.5).